The following is a 502-amino-acid chain: ATP synthase subunit beta (502 aa).

ATP is bound at residue 156–163 (GGAGVGKT).

It belongs to the ATPase alpha/beta chains family. As to quaternary structure, F-type ATPases have 2 components, CF(1) - the catalytic core - and CF(0) - the membrane proton channel. CF(1) has five subunits: alpha(3), beta(3), gamma(1), delta(1), epsilon(1). CF(0) has three main subunits: a(1), b(2) and c(9-12). The alpha and beta chains form an alternating ring which encloses part of the gamma chain. CF(1) is attached to CF(0) by a central stalk formed by the gamma and epsilon chains, while a peripheral stalk is formed by the delta and b chains.

Its subcellular location is the cell membrane. The catalysed reaction is ATP + H2O + 4 H(+)(in) = ADP + phosphate + 5 H(+)(out). Produces ATP from ADP in the presence of a proton gradient across the membrane. The catalytic sites are hosted primarily by the beta subunits. The sequence is that of ATP synthase subunit beta from Cellulophaga lytica (Cytophaga lytica).